A 305-amino-acid polypeptide reads, in one-letter code: uncharacterized protein (305 aa).

3 consecutive transmembrane segments (helical) span residues 52–72, 89–109, and 120–140; these read TINL…SKII, IAGF…FIAA, and VIAI…GSLS.

Belongs to the MscS (TC 1.A.23) family.

Its subcellular location is the cell membrane. This is an uncharacterized protein from Buchnera aphidicola subsp. Acyrthosiphon pisum (strain APS) (Acyrthosiphon pisum symbiotic bacterium).